A 486-amino-acid polypeptide reads, in one-letter code: Cardiolipin synthase A (486 aa).

2 consecutive transmembrane segments (helical) span residues 3-23 and 38-58; these read TFYT…IAGV and MAWL…YLSF. PLD phosphodiesterase domains lie at 219–246 and 399–426; these read MDLR…VDPR and EDGL…DMRS. Active-site residues include H224, K226, D231, H404, K406, and D411.

The protein belongs to the phospholipase D family. Cardiolipin synthase subfamily. ClsA sub-subfamily.

It localises to the cell inner membrane. The enzyme catalyses 2 a 1,2-diacyl-sn-glycero-3-phospho-(1'-sn-glycerol) = a cardiolipin + glycerol. Its function is as follows. Catalyzes the reversible phosphatidyl group transfer from one phosphatidylglycerol molecule to another to form cardiolipin (CL) (diphosphatidylglycerol) and glycerol. This chain is Cardiolipin synthase A, found in Serratia proteamaculans (strain 568).